The following is a 484-amino-acid chain: Probable glycine dehydrogenase (decarboxylating) subunit 2 (484 aa).

K264 carries the N6-(pyridoxal phosphate)lysine modification.

It belongs to the GcvP family. C-terminal subunit subfamily. As to quaternary structure, the glycine cleavage system is composed of four proteins: P, T, L and H. In this organism, the P 'protein' is a heterodimer of two subunits. Pyridoxal 5'-phosphate serves as cofactor.

It carries out the reaction N(6)-[(R)-lipoyl]-L-lysyl-[glycine-cleavage complex H protein] + glycine + H(+) = N(6)-[(R)-S(8)-aminomethyldihydrolipoyl]-L-lysyl-[glycine-cleavage complex H protein] + CO2. The glycine cleavage system catalyzes the degradation of glycine. The P protein binds the alpha-amino group of glycine through its pyridoxal phosphate cofactor; CO(2) is released and the remaining methylamine moiety is then transferred to the lipoamide cofactor of the H protein. The chain is Probable glycine dehydrogenase (decarboxylating) subunit 2 from Legionella pneumophila subsp. pneumophila (strain Philadelphia 1 / ATCC 33152 / DSM 7513).